Here is a 638-residue protein sequence, read N- to C-terminus: ATP-dependent zinc metalloprotease FtsH (638 aa).

Topologically, residues 1 to 4 (MNNQ) are cytoplasmic. Residues 5–25 (GKNIIVWAVIFVFVILLFNVF) traverse the membrane as a helical segment. Topologically, residues 26–103 (QSDGLLSSKN…VVPPETRMNT (78 aa)) are periplasmic. The helical transmembrane segment at 104 to 124 (FLSFLISWFPMLLLIGVWVFF) threads the bilayer. Topologically, residues 125–638 (MRQMHGGGKA…PIKAKKEDKS (514 aa)) are cytoplasmic. An ATP-binding site is contributed by 195 to 202 (GPPGTGKT). His-417 serves as a coordination point for Zn(2+). Glu-418 is an active-site residue. Positions 421 and 495 each coordinate Zn(2+). The disordered stretch occupies residues 523-544 (SASEDMYTNRNSSSDRSESTSE).

In the central section; belongs to the AAA ATPase family. It in the C-terminal section; belongs to the peptidase M41 family. In terms of assembly, homohexamer. It depends on Zn(2+) as a cofactor.

It localises to the cell inner membrane. Its function is as follows. Acts as a processive, ATP-dependent zinc metallopeptidase for both cytoplasmic and membrane proteins. Plays a role in the quality control of integral membrane proteins. The chain is ATP-dependent zinc metalloprotease FtsH from Rickettsia bellii (strain RML369-C).